The sequence spans 195 residues: UPF0167 protein CbrC (195 aa).

The protein belongs to the UPF0167 family.

The chain is UPF0167 protein CbrC (cbrC) from Escherichia coli (strain K12).